A 183-amino-acid chain; its full sequence is Apo-citrate lyase phosphoribosyl-dephospho-CoA transferase (183 aa).

It belongs to the CitX family.

The catalysed reaction is apo-[citrate lyase ACP] + 2'-(5''-triphospho-alpha-D-ribosyl)-3'-dephospho-CoA = holo-[citrate lyase ACP] + diphosphate. In terms of biological role, transfers 2-(5''-triphosphoribosyl)-3'-dephosphocoenzyme-A on a serine residue to the apo-acyl carrier protein (gamma chain) of the citrate lyase to yield holo-acyl carrier protein. The chain is Apo-citrate lyase phosphoribosyl-dephospho-CoA transferase from Escherichia coli O7:K1 (strain IAI39 / ExPEC).